The following is a 253-amino-acid chain: Uridylate kinase (253 aa).

26-29 (KLSG) serves as a coordination point for ATP. Residue glycine 68 coordinates UMP. ATP is bound by residues glycine 69 and arginine 73. Residues aspartate 88 and 149–156 (TGNPFFTT) each bind UMP. Residues threonine 176, tyrosine 182, and aspartate 185 each coordinate ATP.

It belongs to the UMP kinase family. As to quaternary structure, homohexamer.

The protein localises to the cytoplasm. It catalyses the reaction UMP + ATP = UDP + ADP. It participates in pyrimidine metabolism; CTP biosynthesis via de novo pathway; UDP from UMP (UMPK route): step 1/1. Its activity is regulated as follows. Inhibited by UTP. Catalyzes the reversible phosphorylation of UMP to UDP. In Chromohalobacter salexigens (strain ATCC BAA-138 / DSM 3043 / CIP 106854 / NCIMB 13768 / 1H11), this protein is Uridylate kinase.